A 300-amino-acid chain; its full sequence is Acetylglutamate kinase (300 aa).

Substrate is bound by residues 73–74 (GG), R95, and N197.

It belongs to the acetylglutamate kinase family. ArgB subfamily.

Its subcellular location is the cytoplasm. The catalysed reaction is N-acetyl-L-glutamate + ATP = N-acetyl-L-glutamyl 5-phosphate + ADP. It functions in the pathway amino-acid biosynthesis; L-arginine biosynthesis; N(2)-acetyl-L-ornithine from L-glutamate: step 2/4. Functionally, catalyzes the ATP-dependent phosphorylation of N-acetyl-L-glutamate. The protein is Acetylglutamate kinase of Bordetella parapertussis (strain 12822 / ATCC BAA-587 / NCTC 13253).